We begin with the raw amino-acid sequence, 395 residues long: Flap endonuclease 1 (395 aa).

Residues 1-104 (MGIKHLYQII…GELAKRIARK (104 aa)) form an N-domain region. Residue aspartate 34 participates in Mg(2+) binding. Residues arginine 47 and arginine 70 each contribute to the DNA site. Aspartate 86 is a binding site for Mg(2+). The tract at residues 103–123 (RKQEAAEQHEEAKETGTTEDV) is disordered. The tract at residues 122–253 (DVEKFSRRTV…NTALKLIRDH (132 aa)) is I-domain. Residues glutamate 158, glutamate 160, aspartate 179, and aspartate 181 each contribute to the Mg(2+) site. Position 158 (glutamate 158) interacts with DNA. Residues glycine 231 and aspartate 233 each coordinate DNA. Aspartate 233 contributes to the Mg(2+) binding site. Residues 341-349 (QQSRLEGFF) are interaction with PCNA. Basic and acidic residues predominate over residues 356-389 (DEEKASLKRKHEEKLEAAKKKKKEDAKAKREAKS). A disordered region spans residues 356 to 395 (DEEKASLKRKHEEKLEAAKKKKKEDAKAKREAKSRPKGTA).

This sequence belongs to the XPG/RAD2 endonuclease family. FEN1 subfamily. As to quaternary structure, interacts with PCNA. Three molecules of FEN1 bind to one PCNA trimer with each molecule binding to one PCNA monomer. PCNA stimulates the nuclease activity without altering cleavage specificity. It depends on Mg(2+) as a cofactor. In terms of processing, phosphorylated. Phosphorylation upon DNA damage induces relocalization to the nuclear plasma.

The protein localises to the nucleus. It localises to the nucleolus. Its subcellular location is the nucleoplasm. The protein resides in the mitochondrion. Structure-specific nuclease with 5'-flap endonuclease and 5'-3' exonuclease activities involved in DNA replication and repair. During DNA replication, cleaves the 5'-overhanging flap structure that is generated by displacement synthesis when DNA polymerase encounters the 5'-end of a downstream Okazaki fragment. It enters the flap from the 5'-end and then tracks to cleave the flap base, leaving a nick for ligation. Also involved in the long patch base excision repair (LP-BER) pathway, by cleaving within the apurinic/apyrimidinic (AP) site-terminated flap. Acts as a genome stabilization factor that prevents flaps from equilibrating into structures that lead to duplications and deletions. Also possesses 5'-3' exonuclease activity on nicked or gapped double-stranded DNA, and exhibits RNase H activity. Also involved in replication and repair of rDNA and in repairing mitochondrial DNA. The protein is Flap endonuclease 1 of Uncinocarpus reesii (strain UAMH 1704).